The primary structure comprises 581 residues: MQRPGPRLWLVLQVMGSCAAISSMDMERPGDGKCQPIEIPMCKDIGYNMTRMPNLMGHENQREAAIQLHEFAPLVEYGCHGHLRFFLCSLYAPMCTEQVSTPIPACRVMCEQARLKCSPIMEQFNFKWPDSLDCRKLPNKNDPNYLCMEAPNNGSDEPTRGSGLFPPLFRPQRPHSAQEHPLKDGGPGRGGCDNPGKFHHVEKSASCAPLCTPGVDVYWSREDKRFAVVWLAIWAVLCFFSSAFTVLTFLIDPARFRYPERPIIFLSMCYCVYSVGYLIRLFAGAESIACDRDSGQLYVIQEGLESTGCTLVFLVLYYFGMASSLWWVVLTLTWFLAAGKKWGHEAIEANSSYFHLAAWAIPAVKTILILVMRRVAGDELTGVCYVGSMDVNALTGFVLIPLACYLVIGTSFILSGFVALFHIRRVMKTGGENTDKLEKLMVRIGLFSVLYTVPATCVIACYFYERLNMDYWKILAAQHKCKMNNQTKTLDCLMAASIPAVEIFMVKIFMLLVVGITSGMWIWTSKTLQSWQQVCSRRLKKKSRRKPASVITSGGIYKKAQHPQKTHHGKYEIPAQSPTCV.

An N-terminal signal peptide occupies residues 1–20; the sequence is MQRPGPRLWLVLQVMGSCAA. At 21–225 the chain is on the extracellular side; that stretch reads ISSMDMERPG…DVYWSREDKR (205 aa). The FZ domain maps to 29-150; sequence PGDGKCQPIE…NDPNYLCMEA (122 aa). 5 disulfide bridges follow: Cys-34/Cys-95, Cys-42/Cys-88, Cys-79/Cys-117, Cys-106/Cys-147, and Cys-110/Cys-134. An N-linked (GlcNAc...) asparagine glycan is attached at Asn-48. Asn-153 is a glycosylation site (N-linked (GlcNAc...) asparagine). A helical membrane pass occupies residues 226–246; the sequence is FAVVWLAIWAVLCFFSSAFTV. Over 247-262 the chain is Cytoplasmic; the sequence is LTFLIDPARFRYPERP. Residues 263-283 form a helical membrane-spanning segment; it reads IIFLSMCYCVYSVGYLIRLFA. Residues 284 to 311 lie on the Extracellular side of the membrane; it reads GAESIACDRDSGQLYVIQEGLESTGCTL. The helical transmembrane segment at 312-332 threads the bilayer; sequence VFLVLYYFGMASSLWWVVLTL. Residues 333-351 are Cytoplasmic-facing; the sequence is TWFLAAGKKWGHEAIEANS. Residues 352-372 traverse the membrane as a helical segment; sequence SYFHLAAWAIPAVKTILILVM. At 373–393 the chain is on the extracellular side; it reads RRVAGDELTGVCYVGSMDVNA. Residues 394–414 traverse the membrane as a helical segment; that stretch reads LTGFVLIPLACYLVIGTSFIL. Over 415-443 the chain is Cytoplasmic; sequence SGFVALFHIRRVMKTGGENTDKLEKLMVR. A helical transmembrane segment spans residues 444 to 464; the sequence is IGLFSVLYTVPATCVIACYFY. Residues 465–502 are Extracellular-facing; that stretch reads ERLNMDYWKILAAQHKCKMNNQTKTLDCLMAASIPAVE. N-linked (GlcNAc...) asparagine glycosylation is present at Asn-485. A helical membrane pass occupies residues 503 to 523; sequence IFMVKIFMLLVVGITSGMWIW. Residues 524 to 581 are Cytoplasmic-facing; it reads TSKTLQSWQQVCSRRLKKKSRRKPASVITSGGIYKKAQHPQKTHHGKYEIPAQSPTCV. A Lys-Thr-X-X-X-Trp motif, mediates interaction with the PDZ domain of Dvl family members motif is present at residues 526-531; that stretch reads KTLQSW. The tract at residues 560–581 is disordered; the sequence is AQHPQKTHHGKYEIPAQSPTCV. A PDZ-binding motif is present at residues 579–581; it reads TCV.

It belongs to the G-protein coupled receptor Fz/Smo family. Interacts with WNT7B. Interacts with MYOC. Post-translationally, ubiquitinated by ZNRF3, leading to its degradation by the proteasome. In terms of tissue distribution, highest levels in the placenta and fetal kidney, followed by fetal lung and brain. In adult brain, abundantly expressed in the cerebellum, followed by cerebral cortex, medulla and spinal cord; very low levels in total brain, frontal lobe, temporal lobe and putamen. Weak expression detected in adult brain, heart, lung, skeletal muscle, pancreas, spleen and prostate.

Its subcellular location is the cell membrane. In terms of biological role, receptor for Wnt proteins. Functions in the canonical Wnt/beta-catenin signaling pathway. The canonical Wnt/beta-catenin signaling pathway leads to the activation of disheveled proteins, inhibition of GSK-3 kinase, nuclear accumulation of beta-catenin and activation of Wnt target genes. A second signaling pathway involving PKC and calcium fluxes has been seen for some family members, but it is not yet clear if it represents a distinct pathway or if it can be integrated in the canonical pathway, as PKC seems to be required for Wnt-mediated inactivation of GSK-3 kinase. Both pathways seem to involve interactions with G-proteins. May be involved in transduction and intercellular transmission of polarity information during tissue morphogenesis and/or in differentiated tissues. The polypeptide is Frizzled-10 (FZD10) (Homo sapiens (Human)).